The following is a 159-amino-acid chain: Cytochrome c-type biogenesis protein CcmE (159 aa).

Over 1–23 (MNNSSLENSASLKVILKQRKKKR) the chain is Cytoplasmic. Residues 24 to 44 (LLIILLCCLVMAIAASLVVYA) traverse the membrane as a helical; Signal-anchor for type II membrane protein segment. Over 45–159 (MRHAVSFFRM…RLKKHYSVEK (115 aa)) the chain is Periplasmic. Residues H138 and Y142 each coordinate heme.

Belongs to the CcmE/CycJ family.

The protein localises to the cell inner membrane. In terms of biological role, heme chaperone required for the biogenesis of c-type cytochromes. Transiently binds heme delivered by CcmC and transfers the heme to apo-cytochromes in a process facilitated by CcmF and CcmH. The chain is Cytochrome c-type biogenesis protein CcmE from Bartonella tribocorum (strain CIP 105476 / IBS 506).